A 450-amino-acid polypeptide reads, in one-letter code: Glutamyl-tRNA(Gln) amidotransferase subunit A, mitochondrial (450 aa).

Active-site charge relay system residues include K47 and S122. Catalysis depends on S146, which acts as the Acyl-ester intermediate.

It belongs to the amidase family. GatA subfamily. In terms of assembly, subunit of the heterotrimeric GatFAB amidotransferase (AdT) complex, composed of A, B and F subunits.

It is found in the mitochondrion. It catalyses the reaction L-glutamyl-tRNA(Gln) + L-glutamine + ATP + H2O = L-glutaminyl-tRNA(Gln) + L-glutamate + ADP + phosphate + H(+). Functionally, allows the formation of correctly charged Gln-tRNA(Gln) through the transamidation of misacylated Glu-tRNA(Gln) in the mitochondria. The reaction takes place in the presence of glutamine and ATP through an activated gamma-phospho-Glu-tRNA(Gln). The sequence is that of Glutamyl-tRNA(Gln) amidotransferase subunit A, mitochondrial from Candida albicans (strain SC5314 / ATCC MYA-2876) (Yeast).